The primary structure comprises 299 residues: 4-diphosphocytidyl-2-C-methyl-D-erythritol kinase (299 aa).

Lys-18 is a catalytic residue. Residue 104–114 (PIASGIGGGSS) coordinates ATP. The active site involves Asp-146.

Belongs to the GHMP kinase family. IspE subfamily.

It carries out the reaction 4-CDP-2-C-methyl-D-erythritol + ATP = 4-CDP-2-C-methyl-D-erythritol 2-phosphate + ADP + H(+). It functions in the pathway isoprenoid biosynthesis; isopentenyl diphosphate biosynthesis via DXP pathway; isopentenyl diphosphate from 1-deoxy-D-xylulose 5-phosphate: step 3/6. Catalyzes the phosphorylation of the position 2 hydroxy group of 4-diphosphocytidyl-2C-methyl-D-erythritol. This Brucella abortus biovar 1 (strain 9-941) protein is 4-diphosphocytidyl-2-C-methyl-D-erythritol kinase.